A 226-amino-acid chain; its full sequence is Probable transcriptional regulatory protein y4xI (226 aa).

In terms of domain architecture, Response regulatory spans 1-114 (MRTLLVDTDL…ELIARMRALL (114 aa)). The ompR/PhoB-type DNA-binding region spans 122–220 (CPIIEFGNLH…VRGIGYTLEL (99 aa)).

The protein resides in the cytoplasm. The polypeptide is Probable transcriptional regulatory protein y4xI (Sinorhizobium fredii (strain NBRC 101917 / NGR234)).